A 1476-amino-acid chain; its full sequence is Glucosyltransferase-I (1476 aa).

The first 34 residues, 1 to 34 (MDKKVRYKLRKVKKRWVTVSVASAVMTLTTLSGG), serve as a signal peptide directing secretion. 2 disordered regions span residues 42 to 89 (ESKS…ISSS) and 102 to 141 (PYTV…TEAD). Composition is skewed to polar residues over residues 43–81 (SKSQ…QTNH) and 102–139 (PYTV…QTTE). 2 Cell wall-binding repeats span residues 159 to 178 (LPNV…NGKV) and 179 to 199 (RTNF…TGAY). The interval 200–1051 (TDTSIDTVNK…NTYFNISDNK (852 aa)) is catalytic; approximate. Cell wall-binding repeat units follow at residues 1087-1106 (KNTF…NGYM), 1107-1126 (VTGA…NGLQ), 1170-1189 (SVGL…MGYQ), 1214-1234 (RNRF…DGAA), 1235-1254 (VTGS…NGVQ), 1279-1299 (RNRF…NGYA), 1300-1319 (VTGA…NGVQ), 1344-1364 (RNRF…NGYA), 1365-1384 (VTGA…NGVQ), 1409-1429 (RNRF…NGYA), and 1430-1449 (VTGA…NGVQ).

The protein belongs to the glycosyl hydrolase 70 family.

It localises to the secreted. It catalyses the reaction [(1-&gt;6)-alpha-D-glucosyl](n) + sucrose = [(1-&gt;6)-alpha-D-glucosyl](n+1) + D-fructose. Functionally, production of extracellular glucans, that are thought to play a key role in the development of the dental plaque because of their ability to adhere to smooth surfaces and mediate the aggregation of bacterial cells and food debris. This chain is Glucosyltransferase-I (gtfB), found in Streptococcus mutans serotype c (strain ATCC 700610 / UA159).